A 748-amino-acid chain; its full sequence is MEALEVDDISPALEVTEDFFNSFDKLENGVHQSHVFGIHQVPEFLGNEISNKMKEQADGQNANTSQRSIIWERCKSSLFDAKTMNGIHAKEQNESTKRTYSDDPLLSEKEKGTSTFNLLRRLDRPHSVNDSLDHLEDAPKFKPGHNRSRSDVSHIDWKNIRKPAPLQRSSSQGMHCTSPFSEPRNKNMEANNEVRSSFTNILKKGFLETRITPESFWKGCYAEISQYELHIYGSDYSGNHNATDTYHLSHIESITITGSHETKLVNVIMTDDRYLQLKADSAWEAIDWGQKLWEAICALNLVPNYRSIHQDILKKQNNFSDGIRGCMENNVNKLTPSAMNISNGNQKNIIKTGTLYRLTIQSNWKAFTFVLSNSHFAAYQPSCLDEDPLLSYNIDACIAVQMDMLDGYDSCFQVIFPQDVLRLRTETRQRAQEWMDAIISAANSARKSDQSLLVPLRKKSKENQSVKDLQRSKRQSVTTSFLSLLTSLALERGLTAQSFKCAGCQRPIGLSNEKAKVCSYSGWYYCSTCHVDDGFIIPARLIHNWDTSKHKVSKQAKEFLEYVYEEPLIDVHQENPLLYRHVDALAHVVRLRQQLKSLRAYLFSCRAVVAEDLRRRIFPREYLFQQIHLYSLSDLQQVVEGKLAPFLLKIIKFATSHVYSCSLCSQKGFICEICNNGEILYPFEENSTSRCENCGAVFHSDCKVRTVPCPKCVRKELQKKQKSFWQQLDMDGSLDEACSMFELSYQST.

2 disordered regions span residues 88–107 (HAKE…PLLS) and 129–187 (NDSL…RNKN). Basic and acidic residues-rich tracts occupy residues 129 to 140 (NDSLDHLEDAPK) and 148 to 159 (SRSDVSHIDWKN). Residues 167-180 (QRSSSQGMHCTSPF) are compositionally biased toward polar residues. 2 consecutive PH domains span residues 200 to 297 (NILK…EAIC) and 348 to 443 (NIIK…SAAN). The Phorbol-ester/DAG-type zinc-finger motif lies at 656-709 (SHVYSCSLCSQKGFICEICNNGEILYPFEENSTSRCENCGAVFHSDCKVRTVPC).

Its subcellular location is the cytoplasm. The protein resides in the golgi apparatus. It localises to the cell membrane. Functionally, may play a role during muscle differentiation. This is Pleckstrin homology domain-containing family M member 3 (plekhm3) from Xenopus laevis (African clawed frog).